The chain runs to 345 residues: Anthranilate phosphoribosyltransferase 1 (345 aa).

5-phospho-alpha-D-ribose 1-diphosphate contacts are provided by residues Gly86, 89–90 (GD), Thr94, 96–99 (NIST), 114–122 (KHGGRGVSS), and Ser126. Gly86 contributes to the anthranilate binding site. Residue Ser98 coordinates Mg(2+). Residue Arg172 participates in anthranilate binding. Residues Asp231 and Glu232 each coordinate Mg(2+).

It belongs to the anthranilate phosphoribosyltransferase family. In terms of assembly, homodimer. It depends on Mg(2+) as a cofactor.

The catalysed reaction is N-(5-phospho-beta-D-ribosyl)anthranilate + diphosphate = 5-phospho-alpha-D-ribose 1-diphosphate + anthranilate. The protein operates within amino-acid biosynthesis; L-tryptophan biosynthesis; L-tryptophan from chorismate: step 2/5. Catalyzes the transfer of the phosphoribosyl group of 5-phosphorylribose-1-pyrophosphate (PRPP) to anthranilate to yield N-(5'-phosphoribosyl)-anthranilate (PRA). In Ralstonia nicotianae (strain ATCC BAA-1114 / GMI1000) (Ralstonia solanacearum), this protein is Anthranilate phosphoribosyltransferase 1.